The sequence spans 89 residues: Protein M7 (89 aa).

The first 25 residues, 1–25 (MAAMKSLATAILVVLLLRRLPRGLS), serve as a signal peptide directing secretion. Intrachain disulfides connect Cys28–Cys65, Cys38–Cys54, Cys55–Cys80, and Cys67–Cys87.

Belongs to the A9/FIL1 family. In terms of tissue distribution, tapetum of anthers.

Its subcellular location is the secreted. The protein is Protein M7 (M7) of Lilium henryi (Henry's lily).